A 434-amino-acid chain; its full sequence is MKRTMLYLSLLAVSCSVSAAKYPVLTESSPEKAGFNVERLNQMDRWISQQVDVGYPSVNLLIIKDNQIVYRKAWGAAKKYDGSVLMEQPVKATTGTLYDLASNTKMYATNFALQKLMSEGKLHPDDRIAKYIPGFADSPNDTIKGKNTLRISDLLHHSGGFPADPQYPNKAVAGALYSQDKGQTLEMIKRTPLEYQPGSKHIYSDVDYMLLGFIVESVTGQPLDRYVEESIYRPLGLTHTVFNPLLKGFKPQQIAATELNGNTRDGVIHFPNIRTSTLWGQVHDEKAFYSMGGVSGHAGLFSNTGDIAVLMQTMLNGGGYGDVQLFNAETVKMFTTSSKEDATFGLGWRVNGNATMTPTFGTLASPQTYGHTGWTGTVTVIDPVNHMTIVMLSNKPHSPVADPQKNPNMFESGQLPIATYGWVVDQVYAALKQK.

The helical; Signal-anchor transmembrane segment at 7 to 25 (YLSLLAVSCSVSAAKYPVL) threads the bilayer.

The protein belongs to the peptidase S12 family. YfeW subfamily.

The protein resides in the cell inner membrane. The enzyme catalyses Preferential cleavage: (Ac)2-L-Lys-D-Ala-|-D-Ala. Also transpeptidation of peptidyl-alanyl moieties that are N-acyl substituents of D-alanine.. Functionally, penicillin-binding protein. Has low DD-carboxypeptidase activity. The sequence is that of Putative D-alanyl-D-alanine carboxypeptidase from Escherichia coli (strain K12).